The primary structure comprises 357 residues: 3-isopropylmalate dehydrogenase (357 aa).

76–89 is a binding site for NAD(+); the sequence is GYQWESLDISVRPE. The substrate site is built by Arg96, Arg106, Arg134, and Asp224. Mg(2+)-binding residues include Asp224, Asp248, and Asp252. 282-294 contributes to the NAD(+) binding site; that stretch reads GSAPDIAGQNIAN.

This sequence belongs to the isocitrate and isopropylmalate dehydrogenases family. LeuB type 1 subfamily. In terms of assembly, homodimer. Requires Mg(2+) as cofactor. The cofactor is Mn(2+).

The protein resides in the cytoplasm. It catalyses the reaction (2R,3S)-3-isopropylmalate + NAD(+) = 4-methyl-2-oxopentanoate + CO2 + NADH. It functions in the pathway amino-acid biosynthesis; L-leucine biosynthesis; L-leucine from 3-methyl-2-oxobutanoate: step 3/4. Functionally, catalyzes the oxidation of 3-carboxy-2-hydroxy-4-methylpentanoate (3-isopropylmalate) to 3-carboxy-4-methyl-2-oxopentanoate. The product decarboxylates to 4-methyl-2 oxopentanoate. The protein is 3-isopropylmalate dehydrogenase of Hydrogenovibrio crunogenus (strain DSM 25203 / XCL-2) (Thiomicrospira crunogena).